We begin with the raw amino-acid sequence, 298 residues long: N-acetylmuramic acid 6-phosphate etherase (298 aa).

An SIS domain is found at 55 to 218 (IHAQVSGGGR…STGLMIKSGK (164 aa)). The active-site Proton donor is the E83. E114 is a catalytic residue.

This sequence belongs to the GCKR-like family. MurNAc-6-P etherase subfamily. In terms of assembly, homodimer.

The enzyme catalyses N-acetyl-D-muramate 6-phosphate + H2O = N-acetyl-D-glucosamine 6-phosphate + (R)-lactate. It participates in amino-sugar metabolism; 1,6-anhydro-N-acetylmuramate degradation. It functions in the pathway amino-sugar metabolism; N-acetylmuramate degradation. Its pathway is cell wall biogenesis; peptidoglycan recycling. Its function is as follows. Specifically catalyzes the cleavage of the D-lactyl ether substituent of MurNAc 6-phosphate, producing GlcNAc 6-phosphate and D-lactate. Together with AnmK, is also required for the utilization of anhydro-N-acetylmuramic acid (anhMurNAc) either imported from the medium or derived from its own cell wall murein, and thus plays a role in cell wall recycling. This is N-acetylmuramic acid 6-phosphate etherase from Escherichia coli O7:K1 (strain IAI39 / ExPEC).